Consider the following 914-residue polypeptide: Protein translocase subunit SecA (914 aa).

ATP contacts are provided by residues Gln-86, 104–108 (GEGKT), and Asp-512. Zn(2+) is bound by residues Cys-898, Cys-900, Cys-909, and His-910.

This sequence belongs to the SecA family. As to quaternary structure, monomer and homodimer. Part of the essential Sec protein translocation apparatus which comprises SecA, SecYEG and auxiliary proteins SecDF-YajC and YidC. The cofactor is Zn(2+).

It localises to the cell inner membrane. It is found in the cytoplasm. It carries out the reaction ATP + H2O + cellular proteinSide 1 = ADP + phosphate + cellular proteinSide 2.. Functionally, part of the Sec protein translocase complex. Interacts with the SecYEG preprotein conducting channel. Has a central role in coupling the hydrolysis of ATP to the transfer of proteins into and across the cell membrane, serving both as a receptor for the preprotein-SecB complex and as an ATP-driven molecular motor driving the stepwise translocation of polypeptide chains across the membrane. The chain is Protein translocase subunit SecA from Bordetella petrii (strain ATCC BAA-461 / DSM 12804 / CCUG 43448).